The sequence spans 251 residues: Triosephosphate isomerase (251 aa).

Residue 9–11 (NWK) coordinates substrate. His-95 (electrophile) is an active-site residue. Glu-167 (proton acceptor) is an active-site residue. Substrate is bound by residues Gly-173, Ser-213, and 234–235 (GG).

This sequence belongs to the triosephosphate isomerase family. Homodimer.

The protein localises to the cytoplasm. The catalysed reaction is D-glyceraldehyde 3-phosphate = dihydroxyacetone phosphate. The protein operates within carbohydrate biosynthesis; gluconeogenesis. It functions in the pathway carbohydrate degradation; glycolysis; D-glyceraldehyde 3-phosphate from glycerone phosphate: step 1/1. In terms of biological role, involved in the gluconeogenesis. Catalyzes stereospecifically the conversion of dihydroxyacetone phosphate (DHAP) to D-glyceraldehyde-3-phosphate (G3P). The sequence is that of Triosephosphate isomerase from Ligilactobacillus salivarius (strain UCC118) (Lactobacillus salivarius).